A 230-amino-acid polypeptide reads, in one-letter code: Response regulator MprA (230 aa).

The Response regulatory domain occupies 4–118 (RILVVDDDRA…ELLARMRALL (115 aa)). Position 48 is a 4-aspartylphosphate (D48). A DNA-binding region (ompR/PhoB-type) is located at residues 129–227 (SMAMRFSDLT…VRGVGYVLRE (99 aa)).

As to quaternary structure, monomer. Interaction with each conserved 8-bp repeat requires tandem binding by two protein monomers. Post-translationally, phosphorylated and dephosphorylated by MprB.

It is found in the cytoplasm. Its function is as follows. Member of the two-component regulatory system MprB/MprA which contributes to maintaining a balance among several systems involved in stress resistance and is required for establishment and maintenance of persistent infection in the host. Functions as a transcriptional regulator that recognizes a 19-bp nucleotide motif comprizing two loosely conserved 8-bp direct DNA-binding motif repeats separated by a 3-bp spacer region. MprB/MprA up-regulates expression of mprA and pepD. The protein is Response regulator MprA (mprA) of Mycobacterium bovis (strain ATCC BAA-935 / AF2122/97).